The following is a 644-amino-acid chain: Chaperone protein HtpG (644 aa).

Positions 1-352 are a; substrate-binding; that stretch reads MNARVEQLEF…AQDMSLNVSR (352 aa). The interval 353 to 566 is b; that stretch reads EILQQDRQIK…AFGITPALAR (214 aa). Residues 567–644 form a c region; it reads LYRASGQDIP…ILADRLARTL (78 aa).

Belongs to the heat shock protein 90 family. As to quaternary structure, homodimer.

It is found in the cytoplasm. Molecular chaperone. Has ATPase activity. The chain is Chaperone protein HtpG from Mycolicibacterium paratuberculosis (strain ATCC BAA-968 / K-10) (Mycobacterium paratuberculosis).